Here is a 593-residue protein sequence, read N- to C-terminus: Corrinoid activation enzyme RamQ (593 aa).

One can recognise a 2Fe-2S ferredoxin-type domain in the interval 1 to 76; it reads MRVLFPLLEE…GMEIYASREQ (76 aa). Positions 35, 41, 44, and 60 each coordinate [2Fe-2S] cluster.

[2Fe-2S] cluster serves as cofactor.

Involved in the degradation of the quaternary amines L-proline betaine and L-carnitine. Component of a corrinoid-dependent methyltransferase system that transfers a methyl group from L-proline betaine or L-carnitine to tetrahydrofolate (THF), forming methyl-THF, a key intermediate in the Wood-Ljungdahl acetogenesis pathway. RamQ is not required for the methyl transfer, but it stimulates reduction of reconstituted MtqC from the Co(II) state to the Co(I) state in vitro. It also stimulates the rate of THF methylation. This Eubacterium limosum protein is Corrinoid activation enzyme RamQ.